Reading from the N-terminus, the 311-residue chain is Large ribosomal subunit protein uL18 (311 aa).

This sequence belongs to the universal ribosomal protein uL18 family. Component of the large ribosomal subunit (LSU).

The protein localises to the cytoplasm. It localises to the nucleus. Functionally, component of the ribosome, a large ribonucleoprotein complex responsible for the synthesis of proteins in the cell. The small ribosomal subunit (SSU) binds messenger RNAs (mRNAs) and translates the encoded message by selecting cognate aminoacyl-transfer RNA (tRNA) molecules. The large subunit (LSU) contains the ribosomal catalytic site termed the peptidyl transferase center (PTC), which catalyzes the formation of peptide bonds, thereby polymerizing the amino acids delivered by tRNAs into a polypeptide chain. The nascent polypeptides leave the ribosome through a tunnel in the LSU and interact with protein factors that function in enzymatic processing, targeting, and the membrane insertion of nascent chains at the exit of the ribosomal tunnel. This is Large ribosomal subunit protein uL18 (RPL5) from Eimeria tenella (Coccidian parasite).